The following is a 507-amino-acid chain: Sensor protein CseC (507 aa).

A disordered region spans residues Met1–Leu42. A compositionally biased stretch (gly residues) spans Glu25–Gly37. 2 consecutive transmembrane segments (helical) span residues Leu60–His80 and Ala183–Gly203. An HAMP domain is found at Gly204 to Glu260. Positions Asp268 to Ala470 constitute a Histidine kinase domain. His271 carries the post-translational modification Phosphohistidine; by autocatalysis. The segment at Thr472 to Pro507 is disordered. Over residues Ser486 to Pro507 the composition is skewed to polar residues.

The protein localises to the cell membrane. The catalysed reaction is ATP + protein L-histidine = ADP + protein N-phospho-L-histidine.. Its function is as follows. Member of the two-component regulatory system CseB/CseC involved in the stability of the cell envelope, through activation of transcription of RNA polymerase sigma-E factor. CseC functions as a membrane-associated protein kinase that phosphorylates CseB in response to changes in the cell envelope. This chain is Sensor protein CseC (cseC), found in Streptomyces coelicolor (strain ATCC BAA-471 / A3(2) / M145).